The chain runs to 228 residues: Urease accessory protein UreF 1 (228 aa).

This sequence belongs to the UreF family. UreD, UreF and UreG form a complex that acts as a GTP-hydrolysis-dependent molecular chaperone, activating the urease apoprotein by helping to assemble the nickel containing metallocenter of UreC. The UreE protein probably delivers the nickel.

It localises to the cytoplasm. Its function is as follows. Required for maturation of urease via the functional incorporation of the urease nickel metallocenter. Functionally, disruption of the ure1 gene cluster suggests that it protects brucellae during their passage through the stomach. The major route of infection in human brucellosis is oral. The polypeptide is Urease accessory protein UreF 1 (Brucella abortus (strain 2308)).